A 525-amino-acid polypeptide reads, in one-letter code: Cytochrome P450 750A1 (525 aa).

A helical membrane pass occupies residues 13-33 (PLPLPAILIATFIFFFSCWIL). Heme is bound at residue Cys-465.

It belongs to the cytochrome P450 family. Requires heme as cofactor.

Its subcellular location is the membrane. The polypeptide is Cytochrome P450 750A1 (CYP750A1) (Pinus taeda (Loblolly pine)).